Here is a 1088-residue protein sequence, read N- to C-terminus: Probable cellulose synthase A catalytic subunit 9 [UDP-forming] (1088 aa).

The residue at position 1 (Met-1) is an N-acetylmethionine. Over 1–283 the chain is Cytoplasmic; sequence MNTGGRLIAG…RSSRINPYRM (283 aa). Zn(2+) contacts are provided by Cys-39, Cys-42, Cys-58, Cys-61, Cys-66, Cys-69, Cys-81, and Cys-84. An RING-type; degenerate zinc finger spans residues 39 to 85; it reads CKICRDEIELTDNGEPFIACNECAFPTCRPCYEYERREGNQACPQCG. The helical transmembrane segment at 284–304 threads the bilayer; it reads LIFCRLAILGLFFHYRILHPV. At 305–306 the chain is on the extracellular side; that stretch reads ND. A helical membrane pass occupies residues 307 to 327; that stretch reads AFGLWLTSVICEIWFAVSWIL. Topologically, residues 328–871 are cytoplasmic; it reads DQFPKWYPIE…INSVVYPWTS (544 aa). The UDP-alpha-D-glucose site is built by Ser-366, Lys-372, Glu-373, Asp-402, and Lys-543. Asp-402 is a catalytic residue. Mn(2+)-binding residues include Lys-544 and Asp-568. Asp-788 is an active-site residue. The chain crosses the membrane as a helical span at residues 872–892; the sequence is LPLLVYCSLPAICLLTGKFIV. The Extracellular portion of the chain corresponds to 893 to 897; it reads PEISN. The chain crosses the membrane as a helical span at residues 898–918; it reads YAGILFLLMFMSIAVTGILEM. The Cytoplasmic portion of the chain corresponds to 919-933; that stretch reads QWGKIGIDDWWRNEQ. A helical membrane pass occupies residues 934-954; that stretch reads FWVIGGVSSHLFALFQGLLKV. Topologically, residues 955–983 are extracellular; it reads LAGVSTNFTVTSKAADDGEFSELYIFKWT. A glycan (N-linked (GlcNAc...) asparagine) is linked at Asn-961. The helical transmembrane segment at 984–1004 threads the bilayer; that stretch reads SLLIPPTTLLIINIVGVIVGV. Over 1005–1015 the chain is Cytoplasmic; it reads SDAINNGYDSW. The chain crosses the membrane as a helical span at residues 1016-1036; it reads GPLFGRLFFALWVIVHLYPFL. The Extracellular segment spans residues 1037-1045; that stretch reads KGLLGKQDR. A helical transmembrane segment spans residues 1046 to 1066; sequence VPTIILVWSILLASILTLLWV. Topologically, residues 1067–1088 are cytoplasmic; it reads RVNPFVSKDGPVLEICGLDCLK.

Belongs to the glycosyltransferase 2 family. Plant cellulose synthase subfamily. The cofactor is Mn(2+). Requires Zn(2+) as cofactor. As to expression, expressed in young plants, stems and flowers.

The protein resides in the cell membrane. The enzyme catalyses [(1-&gt;4)-beta-D-glucosyl](n) + UDP-alpha-D-glucose = [(1-&gt;4)-beta-D-glucosyl](n+1) + UDP + H(+). Its pathway is glycan metabolism; plant cellulose biosynthesis. Functionally, probable catalytic subunit of cellulose synthase terminal complexes ('rosettes'), required for beta-1,4-glucan microfibril crystallization, a major mechanism of the cell wall formation. This chain is Probable cellulose synthase A catalytic subunit 9 [UDP-forming], found in Arabidopsis thaliana (Mouse-ear cress).